The primary structure comprises 173 residues: uncharacterized protein (173 aa).

A run of 4 helical transmembrane segments spans residues 13 to 35 (LQVI…PLLS), 50 to 72 (IIFI…FLGL), 107 to 129 (NYLI…KYLL), and 139 to 161 (GYLI…RLIL).

Its subcellular location is the cell membrane. This is an uncharacterized protein from Rickettsia prowazekii (strain Madrid E).